A 510-amino-acid polypeptide reads, in one-letter code: Maturase K (510 aa).

This sequence belongs to the intron maturase 2 family. MatK subfamily.

The protein localises to the plastid. The protein resides in the chloroplast. In terms of biological role, usually encoded in the trnK tRNA gene intron. Probably assists in splicing its own and other chloroplast group II introns. The protein is Maturase K of Gratiola officinalis (Hedgehyssop).